The sequence spans 486 residues: Flavin-dependent monooxygenase pboD (486 aa).

FAD is bound by residues Asp-51, Gly-65, and Arg-124. Residue Arg-203 is part of the active site. The FAD site is built by Asp-344 and Gly-357.

This sequence belongs to the paxM FAD-dependent monooxygenase family. The cofactor is FAD.

Its pathway is secondary metabolite biosynthesis. Flavin-dependent monooxygenase; part of the gene cluster that mediates the biosynthesis of protubonine B, a hydroxylated and diacetylated cyclo-L-Trp-L-Leu derivative. Within the pathway, pboD catalyzes the hydroxylation at C-3 of the indole ring of cyclo-L-Trp-L-Leu and subsequent formation of the pyrrolidine ring, eading to the production of protubonine D. PboD is also able to accept other cyclodipeptides (CDPs) as substrates, including cyclo-L-Trp-L-Trp, cyclo-L-Trp-L-Tyr, cyclo-L-Trp-L-Phe, cyclo-L-Trp-L-Met, cyclo-L-Trp-L-Ala, cyclo-L-Trp-L-Pro and cyclo-L-Trp-Gly. Assays with cyclo-L-Trp-L-Trp, cyclo-L-Trp-L-Tyr, cyclo-L-Trp-L-Phe show similar or even slightly higher conversion yields, compared with that of the natural substrate cyclo-L-Trp-L-Leu, whereas cyclo-L-Trp-L-Pro and cyclo-L-Trp-Gly are accepted by PboD but only with conversion yields of 10 and 4%, respectively. Cyclo-L-Trp-L-His is not accepted as a substrate. The first step of the protubonine B synthesis is performed by the nonribosomal peptide synthetase pboA that catalyzes the formation of cyclo-L-Trp-L-Leu by condensing L-Leu with L-Trp. The flavin-dependent monooxygenase pboD is responsible for hydroxylation at C-3 of the indole ring and subsequent formation of the pyrrolidine ring, leadind to protubonine D. Protubonine D is further diacetylated by two acetyltransferases, pboB and pboC, to form the final product protubonine B via protubonine C. This is Flavin-dependent monooxygenase pboD from Aspergillus ustus.